Reading from the N-terminus, the 65-residue chain is UPF0434 protein BBta_0300 (65 aa).

It belongs to the UPF0434 family.

In Bradyrhizobium sp. (strain BTAi1 / ATCC BAA-1182), this protein is UPF0434 protein BBta_0300.